Consider the following 528-residue polypeptide: Peptide chain release factor 3 (528 aa).

Positions 10 to 280 (AKRRTFGIIS…IDMAPAPGPR (271 aa)) constitute a tr-type G domain. GTP contacts are provided by residues 19-26 (SHPDAGKT), 87-91 (DTPGH), and 141-144 (NKLD).

Belongs to the TRAFAC class translation factor GTPase superfamily. Classic translation factor GTPase family. PrfC subfamily.

It is found in the cytoplasm. Increases the formation of ribosomal termination complexes and stimulates activities of RF-1 and RF-2. It binds guanine nucleotides and has strong preference for UGA stop codons. It may interact directly with the ribosome. The stimulation of RF-1 and RF-2 is significantly reduced by GTP and GDP, but not by GMP. In Desulfotalea psychrophila (strain LSv54 / DSM 12343), this protein is Peptide chain release factor 3.